The sequence spans 338 residues: Fructose-1,6-bisphosphatase class 1 (338 aa).

Residues Glu94, Asp116, Leu118, and Asp119 each coordinate Mg(2+). Substrate-binding positions include 119-122 (DGSS), Asn210, and Lys276. Glu282 provides a ligand contact to Mg(2+).

It belongs to the FBPase class 1 family. Homotetramer. Requires Mg(2+) as cofactor.

Its subcellular location is the cytoplasm. The enzyme catalyses beta-D-fructose 1,6-bisphosphate + H2O = beta-D-fructose 6-phosphate + phosphate. It functions in the pathway carbohydrate biosynthesis; gluconeogenesis. In Paraburkholderia phytofirmans (strain DSM 17436 / LMG 22146 / PsJN) (Burkholderia phytofirmans), this protein is Fructose-1,6-bisphosphatase class 1.